Reading from the N-terminus, the 543-residue chain is CTP synthase (543 aa).

Residues 1 to 267 form an amidoligase domain region; that stretch reads MKQTKYIFVT…LSPIAEILDL (267 aa). A CTP-binding site is contributed by S15. S15 is a UTP binding site. Residues 16 to 21 and D73 contribute to the ATP site; that span reads SLGKGI. Positions 73 and 141 each coordinate Mg(2+). Residues 148 to 150, 188 to 193, and K224 contribute to the CTP site; these read DIE and KTKPTQ. UTP contacts are provided by residues 188–193 and K224; that span reads KTKPTQ. The Glutamine amidotransferase type-1 domain occupies 292 to 543; sequence KIAFVGKYVD…IKAAINYEDN (252 aa). G354 provides a ligand contact to L-glutamine. Catalysis depends on C381, which acts as the Nucleophile; for glutamine hydrolysis. L-glutamine is bound by residues 382-385, E405, and R473; that span reads LGMQ. Residues H516 and E518 contribute to the active site.

This sequence belongs to the CTP synthase family. Homotetramer.

The enzyme catalyses UTP + L-glutamine + ATP + H2O = CTP + L-glutamate + ADP + phosphate + 2 H(+). The catalysed reaction is L-glutamine + H2O = L-glutamate + NH4(+). It catalyses the reaction UTP + NH4(+) + ATP = CTP + ADP + phosphate + 2 H(+). It participates in pyrimidine metabolism; CTP biosynthesis via de novo pathway; CTP from UDP: step 2/2. Allosterically activated by GTP, when glutamine is the substrate; GTP has no effect on the reaction when ammonia is the substrate. The allosteric effector GTP functions by stabilizing the protein conformation that binds the tetrahedral intermediate(s) formed during glutamine hydrolysis. Inhibited by the product CTP, via allosteric rather than competitive inhibition. Catalyzes the ATP-dependent amination of UTP to CTP with either L-glutamine or ammonia as the source of nitrogen. Regulates intracellular CTP levels through interactions with the four ribonucleotide triphosphates. This chain is CTP synthase, found in Campylobacter jejuni subsp. jejuni serotype O:6 (strain 81116 / NCTC 11828).